We begin with the raw amino-acid sequence, 333 residues long: MRQTPLWAENWPIAYSVIQAIVILLVVVLVAALMSFIERRLLAWWQDRYGPNRVGPGGMFQIVADMLKIMFKEDWTPKFADKLTFRMAPAVAMATAVLSFIVIPVSPTLGVADMSIGLLFFMAMAGIAVYAVLFGGWASNNKYSLLGGLRSAAQTISYEVFLGISLMGVVAIAGSFNLREIVEAQRDMWFIVPQFLGFMIFVVAGVAVTHRHPFDQPEAEQELAEGYHVEYGGMKWGMFFVAEYVNIVLISALIVTLFFGGWLAPFNLEIPFIPPVFWFIVKTAFFVMMFVLARGALMRPRYDQVMNFGWKVCLPLALVNLMVTGAVILMNQA.

The next 8 helical transmembrane spans lie at 17 to 37 (VIQAIVILLVVVLVAALMSFI), 91 to 111 (VAMATAVLSFIVIPVSPTLGV), 116 to 136 (IGLLFFMAMAGIAVYAVLFGG), 156 to 176 (ISYEVFLGISLMGVVAIAGSF), 188 to 208 (MWFIVPQFLGFMIFVVAGVAV), 244 to 264 (YVNIVLISALIVTLFFGGWLA), 272 to 292 (FIPPVFWFIVKTAFFVMMFVL), and 310 to 330 (WKVCLPLALVNLMVTGAVILM).

Belongs to the complex I subunit 1 family. NDH-1 is composed of 14 different subunits. Subunits NuoA, H, J, K, L, M, N constitute the membrane sector of the complex.

The protein localises to the cell inner membrane. It carries out the reaction a quinone + NADH + 5 H(+)(in) = a quinol + NAD(+) + 4 H(+)(out). In terms of biological role, NDH-1 shuttles electrons from NADH, via FMN and iron-sulfur (Fe-S) centers, to quinones in the respiratory chain. The immediate electron acceptor for the enzyme in this species is believed to be ubiquinone. Couples the redox reaction to proton translocation (for every two electrons transferred, four hydrogen ions are translocated across the cytoplasmic membrane), and thus conserves the redox energy in a proton gradient. This subunit may bind ubiquinone. The sequence is that of NADH-quinone oxidoreductase subunit H from Acinetobacter baylyi (strain ATCC 33305 / BD413 / ADP1).